The chain runs to 457 residues: tRNA modification GTPase MnmE (457 aa).

Residues arginine 24, glutamate 81, and lysine 124 each contribute to the (6S)-5-formyl-5,6,7,8-tetrahydrofolate site. The 160-residue stretch at 220–379 (GIQLVLAGAP…LKQKILHVVG (160 aa)) folds into the TrmE-type G domain. Asparagine 230 lines the K(+) pocket. Residues 230 to 235 (NVGKSS), 249 to 255 (TPIAGTT), and 274 to 277 (DTAG) each bind GTP. Serine 234 lines the Mg(2+) pocket. K(+)-binding residues include threonine 249, isoleucine 251, and threonine 254. Threonine 255 serves as a coordination point for Mg(2+). (6S)-5-formyl-5,6,7,8-tetrahydrofolate is bound at residue lysine 457.

It belongs to the TRAFAC class TrmE-Era-EngA-EngB-Septin-like GTPase superfamily. TrmE GTPase family. Homodimer. Heterotetramer of two MnmE and two MnmG subunits. K(+) is required as a cofactor.

Its subcellular location is the cytoplasm. Its function is as follows. Exhibits a very high intrinsic GTPase hydrolysis rate. Involved in the addition of a carboxymethylaminomethyl (cmnm) group at the wobble position (U34) of certain tRNAs, forming tRNA-cmnm(5)s(2)U34. The polypeptide is tRNA modification GTPase MnmE (Polynucleobacter asymbioticus (strain DSM 18221 / CIP 109841 / QLW-P1DMWA-1) (Polynucleobacter necessarius subsp. asymbioticus)).